Consider the following 117-residue polypeptide: Ribosome-binding factor A (117 aa).

This sequence belongs to the RbfA family. As to quaternary structure, monomer. Binds 30S ribosomal subunits, but not 50S ribosomal subunits or 70S ribosomes.

The protein localises to the cytoplasm. Functionally, one of several proteins that assist in the late maturation steps of the functional core of the 30S ribosomal subunit. Associates with free 30S ribosomal subunits (but not with 30S subunits that are part of 70S ribosomes or polysomes). Required for efficient processing of 16S rRNA. May interact with the 5'-terminal helix region of 16S rRNA. This chain is Ribosome-binding factor A, found in Leuconostoc citreum (strain KM20).